Here is a 275-residue protein sequence, read N- to C-terminus: uncharacterized protein (275 aa).

Transmembrane regions (helical) follow at residues 25–45 (LGYF…FMTA), 70–90 (LLFF…LSAI), 107–127 (IGNF…LRFV), 149–169 (FGQW…IVQF), 203–223 (IARA…AMTA), and 247–267 (ILSI…MKGI).

It localises to the cell membrane. This is an uncharacterized protein from Bacillus subtilis (strain 168).